Reading from the N-terminus, the 590-residue chain is Cell division protein FtsZ 1 (590 aa).

Residues 24-28 (GGGGN), 111-113 (GTG), E142, R146, and D190 each bind GTP. Disordered stretches follow at residues 346 to 372 (AAVPAQPQPTVSLQPVPQPQPVQQPLQ) and 524 to 590 (EATN…RQSS). The span at 534 to 546 (AAAPSAASQQRRP) shows a compositional bias: low complexity. The span at 559–576 (GQLDDHGRAAPQMRSHED) shows a compositional bias: basic and acidic residues.

This sequence belongs to the FtsZ family. In terms of assembly, homodimer. Polymerizes to form a dynamic ring structure in a strictly GTP-dependent manner. Interacts directly with several other division proteins.

The protein resides in the cytoplasm. Its function is as follows. Essential cell division protein that forms a contractile ring structure (Z ring) at the future cell division site. The regulation of the ring assembly controls the timing and the location of cell division. One of the functions of the FtsZ ring is to recruit other cell division proteins to the septum to produce a new cell wall between the dividing cells. Binds GTP and shows GTPase activity. In Rhizobium meliloti (strain 1021) (Ensifer meliloti), this protein is Cell division protein FtsZ 1.